We begin with the raw amino-acid sequence, 166 residues long: Phospholipase A2 inhibitor B1 (166 aa).

An N-terminal signal peptide occupies residues 1–19 (MRLILLSGLLLLGTFLVNG). In terms of domain architecture, C-type lectin spans 46–161 (LFHAFLTVHK…CDDNLLVVCE (116 aa)). 2 disulfide bridges follow: Cys-83–Cys-160 and Cys-138–Cys-152. N-linked (GlcNAc...) asparagine glycosylation is present at Asn-122.

It belongs to the alpha-type phospholipase A2 inhibitor family. Homotrimer; non-covalently linked. Expressed by the liver.

The protein resides in the secreted. Its function is as follows. This phospholipase A2 inhibitor binds directly phospholipase A2 in the presence or absence of calcium. The sequence is that of Phospholipase A2 inhibitor B1 from Crotalus durissus terrificus (South American rattlesnake).